The following is a 446-amino-acid chain: tRNA-2-methylthio-N(6)-dimethylallyladenosine synthase (446 aa).

Positions 3-120 constitute an MTTase N-terminal domain; sequence KKLFIETHGC…LPEMIDAARS (118 aa). [4Fe-4S] cluster-binding residues include C12, C49, C83, C157, C161, and C164. Residues 143 to 375 form the Radical SAM core domain; it reads RVDGPTAFVS…QSRIHQQGYE (233 aa). Residues 378 to 442 enclose the TRAM domain; the sequence is RRMVGSTQRI…PHSLRGTLID (65 aa).

Belongs to the methylthiotransferase family. MiaB subfamily. As to quaternary structure, monomer. Requires [4Fe-4S] cluster as cofactor.

It localises to the cytoplasm. The enzyme catalyses N(6)-dimethylallyladenosine(37) in tRNA + (sulfur carrier)-SH + AH2 + 2 S-adenosyl-L-methionine = 2-methylsulfanyl-N(6)-dimethylallyladenosine(37) in tRNA + (sulfur carrier)-H + 5'-deoxyadenosine + L-methionine + A + S-adenosyl-L-homocysteine + 2 H(+). Its function is as follows. Catalyzes the methylthiolation of N6-(dimethylallyl)adenosine (i(6)A), leading to the formation of 2-methylthio-N6-(dimethylallyl)adenosine (ms(2)i(6)A) at position 37 in tRNAs that read codons beginning with uridine. This is tRNA-2-methylthio-N(6)-dimethylallyladenosine synthase from Pseudomonas aeruginosa (strain UCBPP-PA14).